A 192-amino-acid chain; its full sequence is Ion-translocating oxidoreductase complex subunit B (192 aa).

Residues 1–26 are hydrophobic; it reads MTAIWIAIAALSALALAFGLVLGYAS. The 4Fe-4S domain maps to 32–91; the sequence is ENDPIVEEVEAMLPQSQCGQCGYPGCRPYAEAVSLNGESINKCGPGGEAMMLKLAEKLNV. [4Fe-4S] cluster contacts are provided by cysteine 49, cysteine 52, cysteine 57, cysteine 74, cysteine 117, cysteine 120, cysteine 123, cysteine 127, cysteine 147, cysteine 150, cysteine 153, and cysteine 157. 4Fe-4S ferredoxin-type domains follow at residues 108–137 and 138–167; these read HVAWIDESNCIGCTKCIQACPVDAIIGSTK and AVHTVVSDLCTGCDLCISPCPTDCIELRPI.

Belongs to the 4Fe4S bacterial-type ferredoxin family. RnfB subfamily. In terms of assembly, the complex is composed of six subunits: RnfA, RnfB, RnfC, RnfD, RnfE and RnfG. The cofactor is [4Fe-4S] cluster.

It is found in the cell inner membrane. Part of a membrane-bound complex that couples electron transfer with translocation of ions across the membrane. This is Ion-translocating oxidoreductase complex subunit B from Pectobacterium atrosepticum (strain SCRI 1043 / ATCC BAA-672) (Erwinia carotovora subsp. atroseptica).